Consider the following 120-residue polypeptide: NAD(P)H-quinone oxidoreductase subunit 3, chloroplastic (120 aa).

3 consecutive transmembrane segments (helical) span residues 9 to 29, 64 to 84, and 88 to 108; these read IFWA…LISG, MFAL…PWAM, and VLGV…IVGS.

The protein belongs to the complex I subunit 3 family. As to quaternary structure, NDH is composed of at least 16 different subunits, 5 of which are encoded in the nucleus.

Its subcellular location is the plastid. It localises to the chloroplast thylakoid membrane. The catalysed reaction is a plastoquinone + NADH + (n+1) H(+)(in) = a plastoquinol + NAD(+) + n H(+)(out). It carries out the reaction a plastoquinone + NADPH + (n+1) H(+)(in) = a plastoquinol + NADP(+) + n H(+)(out). In terms of biological role, NDH shuttles electrons from NAD(P)H:plastoquinone, via FMN and iron-sulfur (Fe-S) centers, to quinones in the photosynthetic chain and possibly in a chloroplast respiratory chain. The immediate electron acceptor for the enzyme in this species is believed to be plastoquinone. Couples the redox reaction to proton translocation, and thus conserves the redox energy in a proton gradient. The sequence is that of NAD(P)H-quinone oxidoreductase subunit 3, chloroplastic from Glycine max (Soybean).